Here is a 202-residue protein sequence, read N- to C-terminus: Small ribosomal subunit protein uS4c (202 aa).

A compositionally biased stretch (basic residues) spans 1–13 (MSRYRGPRMKMIR). Residues 1 to 41 (MSRYRGPRMKMIRRPGTLPGLTSKTPGTKVGSSDRSTSSKK) form a disordered region. Low complexity predominate over residues 29-41 (KVGSSDRSTSSKK). The 64-residue stretch at 90–153 (MRLDNTIFRL…KCRLVDRRDM (64 aa)) folds into the S4 RNA-binding domain.

This sequence belongs to the universal ribosomal protein uS4 family. As to quaternary structure, part of the 30S ribosomal subunit. Contacts protein S5. The interaction surface between S4 and S5 is involved in control of translational fidelity.

The protein resides in the plastid. One of the primary rRNA binding proteins, it binds directly to 16S rRNA where it nucleates assembly of the body of the 30S subunit. Its function is as follows. With S5 and S12 plays an important role in translational accuracy. The sequence is that of Small ribosomal subunit protein uS4c (rps4) from Aneura mirabilis (Parasitic liverwort).